A 126-amino-acid polypeptide reads, in one-letter code: MARLSGVDLPREKRVEIALTYIFGIGRTRSRETLAATGVNPDTRVRDLSEDEIVRLREWIDANYRVEGDLNREIKQDIRRKMEIGCYQGLRHRRNLPVHGQRTHTNARTRKGPRRAIAGKKKAGKK.

Residues 96 to 126 are disordered; sequence LPVHGQRTHTNARTRKGPRRAIAGKKKAGKK.

It belongs to the universal ribosomal protein uS13 family. As to quaternary structure, part of the 30S ribosomal subunit. Forms a loose heterodimer with protein S19. Forms two bridges to the 50S subunit in the 70S ribosome.

Functionally, located at the top of the head of the 30S subunit, it contacts several helices of the 16S rRNA. In the 70S ribosome it contacts the 23S rRNA (bridge B1a) and protein L5 of the 50S subunit (bridge B1b), connecting the 2 subunits; these bridges are implicated in subunit movement. Contacts the tRNAs in the A and P-sites. The chain is Small ribosomal subunit protein uS13 from Frankia alni (strain DSM 45986 / CECT 9034 / ACN14a).